A 95-amino-acid polypeptide reads, in one-letter code: MKLLAVAALLAGAAIAAPTSNTGGGSVCPSGLYSNPQCCSTVIIGVIALDCKSPSEVPRDGTDLRNICAKTGQKAACCVIPVAGQALLCETAPGA.

The signal sequence occupies residues 1-16; that stretch reads MKLLAVAALLAGAAIA. 4 disulfide bridges follow: cysteine 28–cysteine 77, cysteine 38–cysteine 68, cysteine 39–cysteine 51, and cysteine 78–cysteine 89.

It belongs to the cerato-ulmin hydrophobin family.

The protein localises to the secreted. It localises to the cell wall. Its function is as follows. Aerial growth, conidiation, and dispersal of filamentous fungi in the environment rely upon a capability of their secreting small amphipathic proteins called hydrophobins (HPBs) with low sequence identity. Class I can self-assemble into an outermost layer of rodlet bundles on aerial cell surfaces, conferring cellular hydrophobicity that supports fungal growth, development and dispersal; whereas Class II form highly ordered films at water-air interfaces through intermolecular interactions but contribute nothing to the rodlet structure. Hyd3 plays a neglectable role in hyphal growth and asexual development and does not seem involved in cellular hydrophobicity, conidial adhesion, stress tolerance nor insect pathogenicity. This Metarhizium robertsii (strain ARSEF 23 / ATCC MYA-3075) (Metarhizium anisopliae (strain ARSEF 23)) protein is Class II hydrophobin 3.